The chain runs to 596 residues: Nuclear receptor subfamily 2 group C member 2 (596 aa).

At serine 19 the chain carries Phosphoserine; by MAPK. At serine 46 the chain carries Phosphoserine. Phosphoserine; by MAPK occurs at positions 55 and 68. Phosphoserine is present on serine 98. Residues 114-189 (VEYCVVCGDK…MGMKMESVQS (76 aa)) constitute a DNA-binding region (nuclear receptor). NR C4-type zinc fingers lie at residues 117 to 137 (CVVC…CEGC) and 153 to 177 (CRSS…LKKC). A Glycyl lysine isopeptide (Lys-Gly) (interchain with G-Cter in SUMO2) cross-link involves residue lysine 192. Serine 219 carries the phosphoserine modification. Lysine 231 is subject to N6-acetyllysine. An NR LBD domain is found at 341-583 (GSIHVISRDQ…SIIPYILKME (243 aa)).

Belongs to the nuclear hormone receptor family. NR2 subfamily. As to quaternary structure, homodimer; can bind DNA as homodimer. Heterodimer; binds DNA as a heterodimer with NR2C1 required for chromatin remodeling and for binding to promoter regions such as globin DR1 repeats. Interacts with NR2C2AP; the interaction represses selective NR2C2-mediated transcriptional activity. Interacts with PCAF; the interaction preferentially occurs on the non-phosphorylated form and induces NR2C2-mediated transactivation activity and does not require the ligand-binding domain. Interacts (MAPK-mediated phosphorylated form) with NRIP1; the interaction promotes repression of NR2C2-mediated activity. Interacts with NLRP10. Interacts (via ligand-binding region) with transcriptional corepressor JAZF1; the interaction promotes NR2C2-mediated transcriptional repression. Post-translationally, phosphorylation on Ser-19 and Ser-68 is an important regulator of NR2C2-mediated transcriptional activity. Phosphorylation on these residues recruits the corepressor, NRIP1, leading to transcripional repression, whereas the non-phosphorylated form preferentially recruits the coactivator, PCAF. As to expression, expressed, during embryogenesis, in perichondrium, developing glomeruli structures and tubules of kidney, as well as in intestiinal villi. Also expressed in lung and hair follicles.

The protein localises to the nucleus. Its function is as follows. Orphan nuclear receptor that can act as a repressor or activator of transcription. An important repressor of nuclear receptor signaling pathways such as retinoic acid receptor, retinoid X, vitamin D3 receptor, thyroid hormone receptor and estrogen receptor pathways. May regulate gene expression during the late phase of spermatogenesis. Activates transcriptional activity of LHCG and is antagonist of PPARA-mediated transactivation. Together with NR2C1, forms the core of the DRED (direct repeat erythroid-definitive) complex that represses embryonic and fetal globin transcription including that of GATA1. Binds to hormone response elements (HREs) consisting of two 5'-AGGTCA-3' half site direct repeat consensus sequences. Plays a fundamental role in early embryonic development and embryonic stem cells. Required for normal spermatogenesis and cerebellum development. Appears to be important for neurodevelopmentally regulated behavior. The sequence is that of Nuclear receptor subfamily 2 group C member 2 (Nr2c2) from Mus musculus (Mouse).